The sequence spans 124 residues: Large ribosomal subunit protein bL19 (124 aa).

Belongs to the bacterial ribosomal protein bL19 family.

This protein is located at the 30S-50S ribosomal subunit interface and may play a role in the structure and function of the aminoacyl-tRNA binding site. This Orientia tsutsugamushi (strain Boryong) (Rickettsia tsutsugamushi) protein is Large ribosomal subunit protein bL19.